The sequence spans 343 residues: Anthranilate phosphoribosyltransferase (343 aa).

5-phospho-alpha-D-ribose 1-diphosphate is bound by residues Gly81, 84-85 (GD), 91-94 (NLST), 109-117 (KHGNRSVSS), and Ser121. Gly81 contacts anthranilate. Ser93 contacts Mg(2+). Asn112 is an anthranilate binding site. Anthranilate is bound at residue Arg167. 2 residues coordinate Mg(2+): Asp226 and Glu227.

Belongs to the anthranilate phosphoribosyltransferase family. In terms of assembly, homodimer. Requires Mg(2+) as cofactor.

It carries out the reaction N-(5-phospho-beta-D-ribosyl)anthranilate + diphosphate = 5-phospho-alpha-D-ribose 1-diphosphate + anthranilate. It participates in amino-acid biosynthesis; L-tryptophan biosynthesis; L-tryptophan from chorismate: step 2/5. Catalyzes the transfer of the phosphoribosyl group of 5-phosphorylribose-1-pyrophosphate (PRPP) to anthranilate to yield N-(5'-phosphoribosyl)-anthranilate (PRA). This chain is Anthranilate phosphoribosyltransferase, found in Cellvibrio japonicus (strain Ueda107) (Pseudomonas fluorescens subsp. cellulosa).